Reading from the N-terminus, the 198-residue chain is MDDASEQIAGVDEVGRGALFGPVVAATVILSDGAIEQLVAQGMTDSKKLSPQRRMILMNQIREVATGFRVGMASVYEIDRLNILQASLLAMRRAVLGLPSTPQLCLVDGNQRIPNLPVPQRTVVKGDQSEPEIAAASILAKVWRDQLIVRLDQRYPGYDLASNKGYGSAKHRQALRELGPTRQHRLSFAPCQASLLPD.

The RNase H type-2 domain occupies 6–198 (EQIAGVDEVG…APCQASLLPD (193 aa)). A divalent metal cation contacts are provided by Asp12, Glu13, and Asp108.

Belongs to the RNase HII family. The cofactor is Mn(2+). Requires Mg(2+) as cofactor.

It localises to the cytoplasm. The enzyme catalyses Endonucleolytic cleavage to 5'-phosphomonoester.. Endonuclease that specifically degrades the RNA of RNA-DNA hybrids. The chain is Ribonuclease HII from Acaryochloris marina (strain MBIC 11017).